A 336-amino-acid chain; its full sequence is Putative cysteine synthase (336 aa).

An N6-(pyridoxal phosphate)lysine modification is found at lysine 41. Pyridoxal 5'-phosphate is bound by residues asparagine 71, 179 to 183 (GTGGS), and serine 269.

The protein belongs to the cysteine synthase/cystathionine beta-synthase family. Pyridoxal 5'-phosphate is required as a cofactor.

The enzyme catalyses O-acetyl-L-serine + hydrogen sulfide = L-cysteine + acetate. Its function is as follows. As it is highly similar to bacterial and plant cysteine synthases, it is possible that it catalyzes a related reaction. The polypeptide is Putative cysteine synthase (Sinorhizobium fredii (strain NBRC 101917 / NGR234)).